We begin with the raw amino-acid sequence, 150 residues long: Ubiquitin-conjugating enzyme E2 3 (150 aa).

The 147-residue stretch at 4-150 (PAKKRLMWDF…VIEIVEQSYV (147 aa)) folds into the UBC core domain. Cysteine 88 functions as the Glycyl thioester intermediate in the catalytic mechanism.

The protein belongs to the ubiquitin-conjugating enzyme family. Expressed in all tissues examined. Lower levels found in leaves.

The catalysed reaction is S-ubiquitinyl-[E1 ubiquitin-activating enzyme]-L-cysteine + [E2 ubiquitin-conjugating enzyme]-L-cysteine = [E1 ubiquitin-activating enzyme]-L-cysteine + S-ubiquitinyl-[E2 ubiquitin-conjugating enzyme]-L-cysteine.. It functions in the pathway protein modification; protein ubiquitination. Functionally, accepts the ubiquitin from the E1 complex and catalyzes its covalent attachment to other proteins. The polypeptide is Ubiquitin-conjugating enzyme E2 3 (UBC3) (Arabidopsis thaliana (Mouse-ear cress)).